The chain runs to 321 residues: Peptide transport system permease protein SapB (321 aa).

Over 1-8 (MIIFTLRR) the chain is Cytoplasmic. A helical membrane pass occupies residues 9 to 29 (LLLLLVTLFFLTFIGFSLSYF). Over 30–80 (TPHAPLQGASLWNAWVFWFNGLLHWDFGVSSINGQLISEQLKEVFPATMEL) the chain is Periplasmic. Positions 74 to 302 (FPATMELCIL…SLVIVVNVIS (229 aa)) constitute an ABC transmembrane type-1 domain. Residues 81 to 101 (CILAFGFALMVGIPVGMLAGV) traverse the membrane as a helical segment. The Cytoplasmic segment spans residues 102-113 (TRSKWPDRFISA). A helical membrane pass occupies residues 114 to 134 (LALLGFSIPVFWLALLLTLFF). Topologically, residues 135–174 (SLTLGWLPVSGRFDLLYEVKPVTGFAIIDAWISDSPWRDE) are periplasmic. A helical transmembrane segment spans residues 175-195 (MVMSAIRHMVLPVLTLSVAPT). At 196–248 (TEVIRLMRISTIEVYDQNYVKAAATRGLSRFTILRRHVLHNALPPVIPRLGLQ) the chain is on the cytoplasmic side. The helical transmembrane segment at 249–269 (FSTMLTLAMITEMVFSWPGLG) threads the bilayer. The Periplasmic portion of the chain corresponds to 270-280 (RWLIHAIRQQD). The chain crosses the membrane as a helical span at residues 281–301 (YAAISAGVMVIGSLVIVVNVI). The Cytoplasmic segment spans residues 302 to 321 (SDILGAMANPLKHKEWYALR).

This sequence belongs to the binding-protein-dependent transport system permease family. OppBC subfamily.

Its subcellular location is the cell inner membrane. In terms of biological role, involved in a peptide intake transport system that plays a role in the resistance to antimicrobial peptides. The polypeptide is Peptide transport system permease protein SapB (Salmonella typhimurium (strain LT2 / SGSC1412 / ATCC 700720)).